Reading from the N-terminus, the 579-residue chain is Carboxysome shell carbonic anhydrase (579 aa).

The interval 72 to 95 (GGGRVRSARDQRQPGWVRRDKGAT) is disordered. Basic and acidic residues predominate over residues 78-93 (SARDQRQPGWVRRDKG). A Zn(2+)-binding site is contributed by cysteine 240. Residue aspartate 242 is the Proton acceptor of the active site. Zn(2+) contacts are provided by histidine 308 and cysteine 319.

This sequence belongs to the beta-class carbonic anhydrase family. CsoSCA subfamily. In terms of assembly, homodimer. Zn(2+) is required as a cofactor.

Its subcellular location is the carboxysome. The catalysed reaction is hydrogencarbonate + H(+) = CO2 + H2O. With respect to regulation, inhibited by dithiothreitol, partially inhibited by acetatzolamide and cyanide. In terms of biological role, reversible hydration of carbon dioxide. Essential for photosynthetic carbon dioxide fixation, supplies CO(2) to RuBisCO (ribulose bisphosphate carboxylase, cbbL-cbbS) in the carboxysome. This Parasynechococcus marenigrum (strain WH8102) protein is Carboxysome shell carbonic anhydrase.